A 617-amino-acid polypeptide reads, in one-letter code: Tetratricopeptide repeat protein 39B (617 aa).

TPR repeat units lie at residues 328-361 (SLIL…QEEW), 520-553 (CLVK…EKLL), and 561-594 (PFTL…YKDY).

The protein belongs to the TTC39 family. High expression in lung and spleen. Low lower expression in liver and small intestine. Weak expression in heart, brain, kidney, adipose, and adrenal gland.

Functionally, regulates high density lipoprotein (HDL) cholesterol metabolism by promoting the ubiquitination and degradation of the oxysterols receptors LXR (NR1H2 and NR1H3). The sequence is that of Tetratricopeptide repeat protein 39B from Mus musculus (Mouse).